A 130-amino-acid chain; its full sequence is Fumarate reductase subunit C (130 aa).

The next 3 helical transmembrane spans lie at 30–50 (EGTSIPAVWFSVLLIYGVFAL), 60–80 (FVSFLQNPLVLFLNILTLFAA), and 110–130 (IKALWVVTVVASAIILAVALL).

The protein belongs to the FrdC family. Part of an enzyme complex containing four subunits: a flavoprotein (FrdA), an iron-sulfur protein (FrdB), and two hydrophobic anchor proteins (FrdC and FrdD).

It localises to the cell inner membrane. Two distinct, membrane-bound, FAD-containing enzymes are responsible for the catalysis of fumarate and succinate interconversion; fumarate reductase is used in anaerobic growth, and succinate dehydrogenase is used in aerobic growth. Anchors the catalytic components of the fumarate reductase complex to the cell inner membrane, binds quinones. This is Fumarate reductase subunit C from Yersinia pseudotuberculosis serotype O:1b (strain IP 31758).